A 333-amino-acid polypeptide reads, in one-letter code: NADH-quinone oxidoreductase subunit H (333 aa).

8 helical membrane-spanning segments follow: residues 15 to 35 (FFIFFGLAVLLLFAVLGFVTY), 88 to 108 (FILAPVIAFAPAFMVLAVIPF), 117 to 137 (IGVGLLYYIAVSGITTIGVVT), 159 to 179 (ISYEIPLVMSVIGIVLLAGSL), 191 to 211 (VWYIFVQPIGFVVFLIAAVAE), 239 to 259 (WAFFMLSEYVYFFGMASLITV), 274 to 296 (IPGAVWFALKFSSVVFLLIWFRV), and 313 to 333 (VLLPIALANIFLTALIKELFF).

The protein belongs to the complex I subunit 1 family. In terms of assembly, NDH-1 is composed of 14 different subunits. Subunits NuoA, H, J, K, L, M, N constitute the membrane sector of the complex.

It is found in the cell membrane. The enzyme catalyses a quinone + NADH + 5 H(+)(in) = a quinol + NAD(+) + 4 H(+)(out). Its function is as follows. NDH-1 shuttles electrons from NADH, via FMN and iron-sulfur (Fe-S) centers, to quinones in the respiratory chain. The immediate electron acceptor for the enzyme in this species is believed to be ubiquinone. Couples the redox reaction to proton translocation (for every two electrons transferred, four hydrogen ions are translocated across the cytoplasmic membrane), and thus conserves the redox energy in a proton gradient. This subunit may bind ubiquinone. The protein is NADH-quinone oxidoreductase subunit H of Bacillus anthracis (strain A0248).